Reading from the N-terminus, the 81-residue chain is Small ribosomal subunit protein bS16 (81 aa).

The protein belongs to the bacterial ribosomal protein bS16 family.

The sequence is that of Small ribosomal subunit protein bS16 from Teredinibacter turnerae (strain ATCC 39867 / T7901).